The following is a 561-amino-acid chain: 2-succinyl-5-enolpyruvyl-6-hydroxy-3-cyclohexene-1-carboxylate synthase (561 aa).

This sequence belongs to the TPP enzyme family. MenD subfamily. In terms of assembly, homodimer. Mg(2+) serves as cofactor. It depends on Mn(2+) as a cofactor. Requires thiamine diphosphate as cofactor.

It carries out the reaction isochorismate + 2-oxoglutarate + H(+) = 5-enolpyruvoyl-6-hydroxy-2-succinyl-cyclohex-3-ene-1-carboxylate + CO2. It functions in the pathway quinol/quinone metabolism; 1,4-dihydroxy-2-naphthoate biosynthesis; 1,4-dihydroxy-2-naphthoate from chorismate: step 2/7. Its pathway is quinol/quinone metabolism; menaquinone biosynthesis. Its function is as follows. Catalyzes the thiamine diphosphate-dependent decarboxylation of 2-oxoglutarate and the subsequent addition of the resulting succinic semialdehyde-thiamine pyrophosphate anion to isochorismate to yield 2-succinyl-5-enolpyruvyl-6-hydroxy-3-cyclohexene-1-carboxylate (SEPHCHC). This Proteus mirabilis (strain HI4320) protein is 2-succinyl-5-enolpyruvyl-6-hydroxy-3-cyclohexene-1-carboxylate synthase.